Reading from the N-terminus, the 330-residue chain is MNLLKRATFIFSEQPLSLAIVIERSFSLGSSGMDNVIPLVRNTIPPLTSKKHKGQDGRIGIIGGCQEYTGAPFFAAISALKVGADLSHVFCTKDAAPVIKSYSPELIVHPVLDSPNAVEEIEKWLPRLHSVVVGPGLGREDMLLKNAKEIIERSKLRGIPVIIDADGLWLVAKEPSVIQGYQRGILTPNFMEFTRLYEAMHHEPLDSSDHKRSAQQLSIALGHLTLVLKGEEDIITDGKNILTCSQEGSGRRCGGQGDLLSGSLGAFAHWAFSSPSDATKGMNPSLVAAFGATSLTRQCNRQAFHKHGRSTTTSDMIQEINSAFKKLFES.

Residues 36–327 form the YjeF C-terminal domain; it reads VIPLVRNTIP…QEINSAFKKL (292 aa). (6S)-NADPHX contacts are provided by residues Gly136 and 189 to 195; that span reads NFMEFTR. Residues 229–233 and 248–257 each bind ATP; these read KGEED and GSGRRCGGQG. Asp258 contacts (6S)-NADPHX.

The protein belongs to the NnrD/CARKD family. The cofactor is Mg(2+).

It carries out the reaction (6S)-NADHX + ATP = ADP + phosphate + NADH + H(+). The enzyme catalyses (6S)-NADPHX + ATP = ADP + phosphate + NADPH + H(+). In terms of biological role, catalyzes the dehydration of the S-form of NAD(P)HX at the expense of ATP, which is converted to ADP. Together with NAD(P)HX epimerase, which catalyzes the epimerization of the S- and R-forms, the enzyme allows the repair of both epimers of NAD(P)HX, a damaged form of NAD(P)H that is a result of enzymatic or heat-dependent hydration. The sequence is that of ATP-dependent (S)-NAD(P)H-hydrate dehydratase from Danio rerio (Zebrafish).